A 54-amino-acid polypeptide reads, in one-letter code: Large ribosomal subunit protein bL32c (54 aa).

Over residues 1-25 (MAVPKKRTSKAKKNSRKANWKRKAA) the composition is skewed to basic residues. Residues 1-26 (MAVPKKRTSKAKKNSRKANWKRKAAK) are disordered.

Belongs to the bacterial ribosomal protein bL32 family.

The protein localises to the plastid. Its subcellular location is the chloroplast. The polypeptide is Large ribosomal subunit protein bL32c (Thalassiosira pseudonana (Marine diatom)).